Reading from the N-terminus, the 537-residue chain is Intercellular adhesion molecule 1 (537 aa).

The first 27 residues, 1-27 (MASTRAKPTLPLLLALVTVVIPGPGDA), serve as a signal peptide directing secretion. Over 28 to 485 (QVSIHPREAF…LTVLYHSQNN (458 aa)) the chain is Extracellular. 2 Ig-like C2-type domains span residues 41–102 (GGSV…QSSA) and 127–195 (GKDL…LDLR). Asparagine 47 carries an N-linked (GlcNAc...) asparagine glycan. 3 disulfide bridges follow: cysteine 48–cysteine 91, cysteine 52–cysteine 95, and cysteine 134–cysteine 188. Positions 151–153 (RGE) match the Cell attachment site; atypical motif. The short motif at 179-181 (RGD) is the Cell attachment site element. Asparagine 185, asparagine 204, asparagine 267, asparagine 311, asparagine 362, asparagine 388, asparagine 409, asparagine 456, and asparagine 469 each carry an N-linked (GlcNAc...) asparagine glycan. An Ig-like C2-type 3 domain is found at 232 to 299 (GTQQKLFCSL…LRCVLELADQ (68 aa)). Residues cysteine 239 and cysteine 292 are joined by a disulfide bond. The Ig-like C2-type 4 domain occupies 327–381 (GSQVTVKCEAHSGSKVVLLSGVEPRPPTPQVQFTLNASSEDHKRSFFCSAALEVA). Residues cysteine 334 and cysteine 374 are joined by a disulfide bond. Intrachain disulfides connect cysteine 406–cysteine 422, cysteine 422–cysteine 461, and cysteine 434–cysteine 461. Residues 415 to 468 (GSQQTLKCQAWGNPSPKMTCRRKADGALLPIGVVKSVKQEMNGTYVCHAFSSHG) form the Ig-like C2-type 5 domain. The helical transmembrane segment at 486-509 (WTIIILVPVLLVIVGLVMAASYVY) threads the bilayer. Topologically, residues 510–537 (NRQRKIRIYKLQKAQEEAIKLKGQAPPP) are cytoplasmic.

Belongs to the immunoglobulin superfamily. ICAM family. In terms of assembly, homodimer. Interacts with MUC1 and promotes cell aggregation in epithelial cells. Interacts with ARHGEF26/SGEF. Interacts (on T cell side) with CD81, CD247 and CD9 at immunological synapses between antigen-presenting cells and T cells. Post-translationally, monoubiquitinated, which is promoted by MARCH9 and leads to endocytosis. As to expression, expressed at low level on a subpopulation of lymphocytes, macrophages, and endothelial cells, but is strongly induced on these cells, and on fibroblasts and epithelial cells.

It localises to the membrane. ICAM proteins are ligands for the leukocyte adhesion protein LFA-1 (integrin alpha-L/beta-2). During leukocyte trans-endothelial migration, ICAM1 engagement promotes the assembly of endothelial apical cups through ARHGEF26/SGEF and RHOG activation. This chain is Intercellular adhesion molecule 1 (Icam1), found in Mus musculus (Mouse).